A 110-amino-acid chain; its full sequence is Nucleoid-associated protein YE3092 (110 aa).

Belongs to the YbaB/EbfC family. As to quaternary structure, homodimer.

It is found in the cytoplasm. It localises to the nucleoid. Its function is as follows. Binds to DNA and alters its conformation. May be involved in regulation of gene expression, nucleoid organization and DNA protection. In Yersinia enterocolitica serotype O:8 / biotype 1B (strain NCTC 13174 / 8081), this protein is Nucleoid-associated protein YE3092.